The primary structure comprises 603 residues: Elongation factor 4 (603 aa).

Residues 7 to 189 (SRIRNFCIIA…SIVHLVPPPS (183 aa)) form the tr-type G domain. GTP is bound by residues 19 to 24 (DHGKST) and 136 to 139 (NKID).

The protein belongs to the TRAFAC class translation factor GTPase superfamily. Classic translation factor GTPase family. LepA subfamily.

The protein resides in the cell inner membrane. It catalyses the reaction GTP + H2O = GDP + phosphate + H(+). Required for accurate and efficient protein synthesis under certain stress conditions. May act as a fidelity factor of the translation reaction, by catalyzing a one-codon backward translocation of tRNAs on improperly translocated ribosomes. Back-translocation proceeds from a post-translocation (POST) complex to a pre-translocation (PRE) complex, thus giving elongation factor G a second chance to translocate the tRNAs correctly. Binds to ribosomes in a GTP-dependent manner. The chain is Elongation factor 4 from Crocosphaera subtropica (strain ATCC 51142 / BH68) (Cyanothece sp. (strain ATCC 51142)).